The following is a 338-amino-acid chain: GTPase Obg (338 aa).

The Obg domain maps to 1–159 (MQFIDEVKIH…RWLRLELKLM (159 aa)). The segment at 66–91 (KAGRGKNGMGKDRHGANGDDLTIPVP) is disordered. Positions 160 to 331 (ADVGLLGFPN…LLDEIARHLW (172 aa)) constitute an OBG-type G domain. GTP-binding positions include 166–173 (GFPNVGKS), 191–195 (FTTIK), 213–216 (DIPG), 283–286 (NKID), and 312–314 (SAA). S173 and T193 together coordinate Mg(2+).

It belongs to the TRAFAC class OBG-HflX-like GTPase superfamily. OBG GTPase family. Monomer. It depends on Mg(2+) as a cofactor.

The protein resides in the cytoplasm. An essential GTPase which binds GTP, GDP and possibly (p)ppGpp with moderate affinity, with high nucleotide exchange rates and a fairly low GTP hydrolysis rate. Plays a role in control of the cell cycle, stress response, ribosome biogenesis and in those bacteria that undergo differentiation, in morphogenesis control. The chain is GTPase Obg from Geobacter metallireducens (strain ATCC 53774 / DSM 7210 / GS-15).